A 421-amino-acid chain; its full sequence is 3-isopropylmalate dehydratase large subunit (421 aa).

The [4Fe-4S] cluster site is built by C302, C362, and C365.

This sequence belongs to the aconitase/IPM isomerase family. LeuC type 2 subfamily. In terms of assembly, heterodimer of LeuC and LeuD. The cofactor is [4Fe-4S] cluster.

The catalysed reaction is (2R,3S)-3-isopropylmalate = (2S)-2-isopropylmalate. Its pathway is amino-acid biosynthesis; L-leucine biosynthesis; L-leucine from 3-methyl-2-oxobutanoate: step 2/4. Functionally, catalyzes the isomerization between 2-isopropylmalate and 3-isopropylmalate, via the formation of 2-isopropylmaleate. This Campylobacter fetus subsp. fetus (strain 82-40) protein is 3-isopropylmalate dehydratase large subunit.